Reading from the N-terminus, the 406-residue chain is COP9 signalosome complex subunit 4 (406 aa).

Ala2 carries the N-acetylalanine modification. Lys25 is modified (N6-acetyllysine). In terms of domain architecture, PCI spans 197–366 (YRRKFIEAAQ…GIVHFETREA (170 aa)).

The protein belongs to the CSN4 family. In terms of assembly, component of the CSN complex, composed of COPS1/GPS1, COPS2, COPS3, COPS4, COPS5, COPS6, COPS7 (COPS7A or COPS7B), COPS8 and COPS9. In the complex, it probably interacts directly with COPS1, COPS2, COPS3, COPS5, COPS6, COPS7 (COPS7A or COPS7B) and COPS8. Interacts with TOR1A; the interaction is direct and associates TOR1A and SNAPIN with the CSN complex. Interacts with STON2; controls STON2 neddylation levels. Interacts with ERCC6.

Its subcellular location is the cytoplasm. It localises to the nucleus. The protein localises to the cytoplasmic vesicle. It is found in the secretory vesicle. The protein resides in the synaptic vesicle. In terms of biological role, component of the COP9 signalosome complex (CSN), a complex involved in various cellular and developmental processes. The CSN complex is an essential regulator of the ubiquitin (Ubl) conjugation pathway by mediating the deneddylation of the cullin subunits of SCF-type E3 ligase complexes, leading to decrease the Ubl ligase activity of SCF-type complexes such as SCF, CSA or DDB2. Also involved in the deneddylation of non-cullin subunits such as STON2. The complex is also involved in phosphorylation of p53/TP53, c-jun/JUN, IkappaBalpha/NFKBIA, ITPK1, IRF8/ICSBP and SNAPIN, possibly via its association with CK2 and PKD kinases. CSN-dependent phosphorylation of TP53 and JUN promotes and protects degradation by the Ubl system, respectively. In Pongo abelii (Sumatran orangutan), this protein is COP9 signalosome complex subunit 4 (COPS4).